We begin with the raw amino-acid sequence, 148 residues long: Large ribosomal subunit protein bL9 (148 aa).

This sequence belongs to the bacterial ribosomal protein bL9 family.

In terms of biological role, binds to the 23S rRNA. This is Large ribosomal subunit protein bL9 from Syntrophobacter fumaroxidans (strain DSM 10017 / MPOB).